Here is a 227-residue protein sequence, read N- to C-terminus: MMLQIPDVLSKAQVAQCRQMMDVADWTDGNATSGHQSALAKRNMQLPEGSPVARQIGDLIQDALGANATFFSAALPLKVFPPLFNRYEGGQAFDNHVDNAIRYLRGTGFRVRSDLSATLFLTEPQDYDGGELVIEDTYGQHRVKLPAGYMVLYPATSLHHVTPVTRGARVSSFFWIQSMVRDEGQRALLFELDTRIQQVAEEMGQKDSGVVGLTGVYHNLLRRWADA.

The region spanning 78–178 (KVFPPLFNRY…RVSSFFWIQS (101 aa)) is the Fe2OG dioxygenase domain. 3 residues coordinate Fe cation: H96, D98, and H159. R169 lines the 2-oxoglutarate pocket.

Requires Fe(2+) as cofactor. L-ascorbate serves as cofactor.

This chain is PKHD-type hydroxylase Reut_B4660, found in Cupriavidus pinatubonensis (strain JMP 134 / LMG 1197) (Cupriavidus necator (strain JMP 134)).